A 405-amino-acid chain; its full sequence is Potassium channel subfamily K member 18 (405 aa).

A helical membrane pass occupies residues 43 to 63 (LPGLCFLCCLVTYALVGAALF). Asn94 is a glycosylation site (N-linked (GlcNAc...) asparagine). Residues 125–151 (FLSALFFCCTVFSTVGYGHMYPVTRLG) constitute an intramembrane region (pore-forming). Residues Thr138, Val139, Gly140, and Tyr141 each coordinate K(+). A selectivity filter 1 region spans residues 138-143 (TVGYGH). The chain crosses the membrane as a helical span at residues 153-173 (FLCMLYALFGIPLMFLVLTDI). The tract at residues 221–226 (PQIVID) is interaction with calcineurin. The segment at 272–277 (RSNSCP) is interaction with YWHAH. 2 positions are modified to phosphoserine: Ser275 and Ser287. The helical transmembrane segment at 304–324 (IPLPVIALVIFAYISCAAAIL) threads the bilayer. Residues 337–351 (FYFCFVTLTTIGFGD) constitute an intramembrane region (pore-forming). A selectivity filter 2 region spans residues 346–351 (TIGFGD). The helical transmembrane segment at 358-378 (HFFLFFSIYIIVGMEILFIAF) threads the bilayer.

The protein belongs to the two pore domain potassium channel (TC 1.A.1.8) family. In terms of assembly, homodimer. Heterodimer with KCNK2. Heterodimer with KCNK10. Interacts with calcineurin. Interacts with YWHAH, in a phosphorylation-dependent manner. Post-translationally, phosphorylation of Ser-275 is required for the binding of 14-3-3eta/YWHAH. Calcineurin-mediated dephosphorylation of Ser-287 enhances channel activity. In terms of processing, N-glycosylated.

The protein localises to the cell membrane. It catalyses the reaction K(+)(in) = K(+)(out). With respect to regulation, activated by volatile anesthetics, such as isoflurane and inhibited by local anesthetics such as bupivacaine and lidocaine. Inhibited by extracellular acidic pH. Inhibited by Zn(2+) ions. Functionally, k(+) channel that conducts outward and inward rectifying currents at depolarized and hyperpolarized membrane potentials, respectively. The outward rectifying currents are voltage-dependent, coupled to K(+) electrochemical gradient across the membrane, whereas the inward currents can be induced in response to activation of Ca(2+)-mobilizing receptors. Homo- and heterodimerizes to form functional channels with distinct regulatory and gating properties. In trigeminal ganglia sensory neurons, the heterodimers of KCNK18/TRESK and KCNK2/TREK-1 or KCNK10/TREK-2 inhibit neuronal firing and neurogenic inflammation by stabilizing the resting membrane potential at K(+) equilibrium potential as well as by regulating the threshold of action potentials and the spike frequency. In thymocytes, conducts K(+) currents upon T cell receptor (TCR) signaling leading to sustained Ca(2+) influx and NF-kappa-B activation, FOXP3 transcription and positive selection of regulatory T cell (Treg) progenitor subsets. Appears to mediate the analgesics effects of hydroxy-alpha-sanshool, a metabolite naturally present in Schezuan pepper and other Xanthoxylum plants. The chain is Potassium channel subfamily K member 18 (Kcnk18) from Rattus norvegicus (Rat).